We begin with the raw amino-acid sequence, 180 residues long: ATP-dependent protease subunit HslV (180 aa).

T7 is a catalytic residue. G165, C168, and T171 together coordinate Na(+).

Belongs to the peptidase T1B family. HslV subfamily. In terms of assembly, a double ring-shaped homohexamer of HslV is capped on each side by a ring-shaped HslU homohexamer. The assembly of the HslU/HslV complex is dependent on binding of ATP.

It localises to the cytoplasm. It carries out the reaction ATP-dependent cleavage of peptide bonds with broad specificity.. With respect to regulation, allosterically activated by HslU binding. Its function is as follows. Protease subunit of a proteasome-like degradation complex believed to be a general protein degrading machinery. This Bacillus cereus (strain Q1) protein is ATP-dependent protease subunit HslV.